Reading from the N-terminus, the 165-residue chain is 3-isopropylmalate dehydratase small subunit (165 aa).

The protein belongs to the LeuD family. LeuD type 2 subfamily. Heterodimer of LeuC and LeuD.

It catalyses the reaction (2R,3S)-3-isopropylmalate = (2S)-2-isopropylmalate. It functions in the pathway amino-acid biosynthesis; L-leucine biosynthesis; L-leucine from 3-methyl-2-oxobutanoate: step 2/4. Its function is as follows. Catalyzes the isomerization between 2-isopropylmalate and 3-isopropylmalate, via the formation of 2-isopropylmaleate. The protein is 3-isopropylmalate dehydratase small subunit of Saccharolobus islandicus (strain M.14.25 / Kamchatka #1) (Sulfolobus islandicus).